The sequence spans 197 residues: uncharacterized protein (197 aa).

The N-terminal stretch at 1–23 is a signal peptide; that stretch reads MSARAPKELRLALPPCLLNRTFA. Topologically, residues 24–61 are extracellular; that stretch reads SPNASGSGNTGARGPGAVGSGTCITQVGQQLFQSFSST. Residue asparagine 26 is glycosylated (N-linked (GlcNAc...) asparagine). Residues 62–82 form a helical membrane-spanning segment; the sequence is LVLIVLVTLIFCLIVLSLSTF. The Cytoplasmic portion of the chain corresponds to 83–197; it reads HIHKRRMKKR…EGLLQTVVLS (115 aa). The disordered stretch occupies residues 94 to 180; that stretch reads MQRAQEEYER…SSPQGAHAAS (87 aa). Basic and acidic residues-rich tracts occupy residues 96–107 and 125–136; these read RAQEEYERDHCS and HAKETRLERQPR. Over residues 141–161 the composition is skewed to low complexity; that stretch reads CAPSNASSLSSSSPGLPCQGP. Pro residues predominate over residues 162–171; sequence CAPPPPPPAS.

The protein localises to the membrane. This is an uncharacterized protein from Homo sapiens (Human).